The sequence spans 505 residues: L-arabinose isomerase (505 aa).

Mn(2+)-binding residues include Glu308, Glu335, His352, and His453.

This sequence belongs to the arabinose isomerase family. Mn(2+) serves as cofactor.

The enzyme catalyses beta-L-arabinopyranose = L-ribulose. It participates in carbohydrate degradation; L-arabinose degradation via L-ribulose; D-xylulose 5-phosphate from L-arabinose (bacterial route): step 1/3. Catalyzes the conversion of L-arabinose to L-ribulose. The sequence is that of L-arabinose isomerase from Bifidobacterium animalis subsp. lactis (strain AD011).